A 315-amino-acid polypeptide reads, in one-letter code: Methionyl-tRNA formyltransferase (315 aa).

The interval 2–189 is N-terminal domain; that stretch reads SDSLRIIFAG…LITTLKQLAD (188 aa). 113–116 contacts (6S)-5,6,7,8-tetrahydrofolate; sequence SLLP. Residues 210–315 are C-terminal domain; sequence KEEARIDWSL…EWFIPGNRLA (106 aa).

The protein belongs to the Fmt family.

It catalyses the reaction L-methionyl-tRNA(fMet) + (6R)-10-formyltetrahydrofolate = N-formyl-L-methionyl-tRNA(fMet) + (6S)-5,6,7,8-tetrahydrofolate + H(+). In terms of biological role, attaches a formyl group to the free amino group of methionyl-tRNA(fMet). The formyl group appears to play a dual role in the initiator identity of N-formylmethionyl-tRNA by promoting its recognition by IF2 and preventing the misappropriation of this tRNA by the elongation apparatus. This chain is Methionyl-tRNA formyltransferase, found in Salmonella typhi.